An 89-amino-acid chain; its full sequence is Cell division topological specificity factor (89 aa).

It belongs to the MinE family.

Functionally, prevents the cell division inhibition by proteins MinC and MinD at internal division sites while permitting inhibition at polar sites. This ensures cell division at the proper site by restricting the formation of a division septum at the midpoint of the long axis of the cell. This is Cell division topological specificity factor from Brucella anthropi (strain ATCC 49188 / DSM 6882 / CCUG 24695 / JCM 21032 / LMG 3331 / NBRC 15819 / NCTC 12168 / Alc 37) (Ochrobactrum anthropi).